Consider the following 264-residue polypeptide: MSKLKLHGFNNLTKSLSFCIYDICYAKTADDRDGYIAYIDEQYNANRLTEILSETCSIIGANILNIARQDYDPQGASVTILVSEEPVDPRDVDTSEHPGPLPSAVVAHLDKSHICVHTYPESHPEAGLCTFRADIEVSTCGVISPLKALNYLIHQLESDIVTMDYRVRGFTRDINGVKHFIDHKINSIQNFMSDDMKSLYHMMDVNVYQENIFHTKMMLKDFDLKHYLFNAKPEELSAEEKEQITRLLYKEMQEIYYGRNVPEV.

The Schiff-base intermediate with substrate; via pyruvic acid role is filled by serine 112. Serine 112 bears the Pyruvic acid (Ser); by autocatalysis mark. The Proton acceptor; for processing activity role is filled by histidine 117. The active-site Proton donor; for catalytic activity is cysteine 140.

This sequence belongs to the prokaryotic AdoMetDC family. Type 2 subfamily. As to quaternary structure, heterooctamer of four alpha and four beta chains arranged as a tetramer of alpha/beta heterodimers. Pyruvate is required as a cofactor. Is synthesized initially as an inactive proenzyme. Formation of the active enzyme involves a self-maturation process in which the active site pyruvoyl group is generated from an internal serine residue via an autocatalytic post-translational modification. Two non-identical subunits are generated from the proenzyme in this reaction, and the pyruvate is formed at the N-terminus of the alpha chain, which is derived from the carboxyl end of the proenzyme. The post-translation cleavage follows an unusual pathway, termed non-hydrolytic serinolysis, in which the side chain hydroxyl group of the serine supplies its oxygen atom to form the C-terminus of the beta chain, while the remainder of the serine residue undergoes an oxidative deamination to produce ammonia and the pyruvoyl group blocking the N-terminus of the alpha chain.

The enzyme catalyses S-adenosyl-L-methionine + H(+) = S-adenosyl 3-(methylsulfanyl)propylamine + CO2. It participates in amine and polyamine biosynthesis; S-adenosylmethioninamine biosynthesis; S-adenosylmethioninamine from S-adenosyl-L-methionine: step 1/1. Its function is as follows. Catalyzes the decarboxylation of S-adenosylmethionine to S-adenosylmethioninamine (dcAdoMet), the propylamine donor required for the synthesis of the polyamines spermine and spermidine from the diamine putrescine. The polypeptide is S-adenosylmethionine decarboxylase proenzyme (Yersinia pseudotuberculosis serotype O:1b (strain IP 31758)).